Consider the following 455-residue polypeptide: Serine--tRNA ligase (455 aa).

252–254 is a binding site for L-serine; the sequence is TAE. ATP contacts are provided by residues 283 to 285 and Val299; that span reads RKE. Residue Glu306 participates in L-serine binding. ATP is bound at residue 370–373; that stretch reads EVVS. An L-serine-binding site is contributed by Thr406.

The protein belongs to the class-II aminoacyl-tRNA synthetase family. Type-1 seryl-tRNA synthetase subfamily. As to quaternary structure, homodimer. The tRNA molecule binds across the dimer.

The protein resides in the cytoplasm. The catalysed reaction is tRNA(Ser) + L-serine + ATP = L-seryl-tRNA(Ser) + AMP + diphosphate + H(+). It carries out the reaction tRNA(Sec) + L-serine + ATP = L-seryl-tRNA(Sec) + AMP + diphosphate + H(+). It participates in aminoacyl-tRNA biosynthesis; selenocysteinyl-tRNA(Sec) biosynthesis; L-seryl-tRNA(Sec) from L-serine and tRNA(Sec): step 1/1. Functionally, catalyzes the attachment of serine to tRNA(Ser). Is also able to aminoacylate tRNA(Sec) with serine, to form the misacylated tRNA L-seryl-tRNA(Sec), which will be further converted into selenocysteinyl-tRNA(Sec). The chain is Serine--tRNA ligase from Pyrococcus furiosus (strain ATCC 43587 / DSM 3638 / JCM 8422 / Vc1).